We begin with the raw amino-acid sequence, 890 residues long: DNA mismatch repair protein MutS (890 aa).

634 to 641 (GPNMGGKS) contacts ATP.

This sequence belongs to the DNA mismatch repair MutS family.

In terms of biological role, this protein is involved in the repair of mismatches in DNA. It is possible that it carries out the mismatch recognition step. This protein has a weak ATPase activity. This is DNA mismatch repair protein MutS from Burkholderia pseudomallei (strain 1710b).